Reading from the N-terminus, the 579-residue chain is Leucine-rich repeat-containing protein 15 (579 aa).

Positions methionine 1–alanine 21 are cleaved as a signal peptide. The 32-residue stretch at tyrosine 22–tryptophan 53 folds into the LRRNT domain. The Extracellular portion of the chain corresponds to tyrosine 22–glycine 536. LRR repeat units follow at residues asparagine 54–asparagine 75, alanine 78–asparagine 99, serine 102–aspartate 123, asparagine 126–glutamine 147, asparagine 150–histidine 171, glycine 174–histidine 195, asparagine 198–alanine 219, asparagine 222–asparagine 243, asparagine 246–glutamine 267, histidine 270–proline 291, asparagine 294–histidine 315, glutamine 318–glycine 339, asparagine 342–serine 363, asparagine 366–asparagine 387, and glycine 390–histidine 411. Asparagine 75 is a glycosylation site (N-linked (GlcNAc...) asparagine). An N-linked (GlcNAc...) asparagine glycan is attached at asparagine 369. Residues asparagine 423–glycine 473 form the LRRCT domain. Residues valine 476–threonine 509 are disordered. The span at serine 485–threonine 506 shows a compositional bias: low complexity. A helical transmembrane segment spans residues leucine 537–isoleucine 557. Residues cysteine 558 to cysteine 579 lie on the Cytoplasmic side of the membrane.

Expressed in chodrocytes (at protein level).

It localises to the cell membrane. This chain is Leucine-rich repeat-containing protein 15 (Lrrc15), found in Mus musculus (Mouse).